Consider the following 166-residue polypeptide: Transmembrane protein 190 (166 aa).

Residues 1-21 form the signal peptide; the sequence is MVGSGISALGLLLLMQGSVDA. Over 22–81 the chain is Extracellular; the sequence is NGIQGFFYPWSCEGDVWDRESCGGQAAIENPNLCLRLRCCYRDGVCYHQRPDENMRRKHM. Residues 31 to 71 enclose the P-type domain; sequence WSCEGDVWDRESCGGQAAIENPNLCLRLRCCYRDGVCYHQR. 3 cysteine pairs are disulfide-bonded: C33–C61, C43–C60, and C55–C67. Residues 82-102 form a helical membrane-spanning segment; it reads WALGWTCGSLLFLITSICLFW. Residues 103–166 are Cytoplasmic-facing; sequence WARRQDMLHL…VSGEDTGGEE (64 aa). Positions 130 to 166 are disordered; the sequence is LSKDRRSANKSTTVLQSPGGEVETAAAVSGEDTGGEE.

Detected in testis and in a mixture of spermatogenic cells at various stages (testicular germ cells). Not detected in heart, brain, spleen, lung, liver, skeletal muscle and kidney.

The protein resides in the membrane. The protein is Transmembrane protein 190 (Tmem190) of Mus musculus (Mouse).